The chain runs to 224 residues: Lipoprotein-releasing system ATP-binding protein LolD (224 aa).

Residues 5–224 (LEILDVSKCY…SLSGGMLTEL (220 aa)) form the ABC transporter domain. Residue 40 to 47 (GSSGSGKS) participates in ATP binding.

The protein belongs to the ABC transporter superfamily. Lipoprotein translocase (TC 3.A.1.125) family. As to quaternary structure, the complex is composed of two ATP-binding proteins (LolD) and two transmembrane proteins (LolC and LolE).

It localises to the cell inner membrane. In terms of biological role, part of the ABC transporter complex LolCDE involved in the translocation of mature outer membrane-directed lipoproteins, from the inner membrane to the periplasmic chaperone, LolA. Responsible for the formation of the LolA-lipoprotein complex in an ATP-dependent manner. In Anaplasma marginale (strain St. Maries), this protein is Lipoprotein-releasing system ATP-binding protein LolD.